A 72-amino-acid polypeptide reads, in one-letter code: MAKDDVIEVDGIVKEALPNAMFRVELENGHVVLCHIAGKMRMHYIKILPGDKVKVELTPYSLDKGRITFRYK.

The S1-like domain maps to 1-72 (MAKDDVIEVD…DKGRITFRYK (72 aa)).

It belongs to the IF-1 family. In terms of assembly, component of the 30S ribosomal translation pre-initiation complex which assembles on the 30S ribosome in the order IF-2 and IF-3, IF-1 and N-formylmethionyl-tRNA(fMet); mRNA recruitment can occur at any time during PIC assembly.

It is found in the cytoplasm. One of the essential components for the initiation of protein synthesis. Stabilizes the binding of IF-2 and IF-3 on the 30S subunit to which N-formylmethionyl-tRNA(fMet) subsequently binds. Helps modulate mRNA selection, yielding the 30S pre-initiation complex (PIC). Upon addition of the 50S ribosomal subunit IF-1, IF-2 and IF-3 are released leaving the mature 70S translation initiation complex. The protein is Translation initiation factor IF-1 of Nitratiruptor sp. (strain SB155-2).